The following is a 1006-amino-acid chain: Serine/threonine-protein phosphatase BSL3 (1006 aa).

The interval 1–67 (MDLDSSMVPE…QQQQQPQVTA (67 aa)) is disordered. Low complexity-rich tracts occupy residues 38–47 (SESESASLTP) and 54–67 (QQQQ…QVTA). Kelch repeat units lie at residues 138–184 (TSAG…VATA), 242–290 (YLMA…TASA), 295–345 (LLLL…VFVN), 351–398 (SGGA…DAAG), and 419–465 (LIFI…TPPG). Disordered stretches follow at residues 454-494 (AAAA…LGSP) and 552-579 (GEVE…IKPD). Phosphoserine is present on Ser-616. Positions 709, 711, 743, and 775 each coordinate Mn(2+). His-776 (proton donor) is an active-site residue. Mn(2+) is bound by residues His-828 and His-907. Ser-964 carries the phosphoserine modification. The segment at 982-1006 (NVNRPPTPTRGRPQNPNDRGSLAWI) is disordered.

It belongs to the PPP phosphatase family. BSU subfamily. Mn(2+) serves as cofactor. Expressed throughout the plant, with a higher level in younger parts.

The protein resides in the nucleus. It catalyses the reaction O-phospho-L-seryl-[protein] + H2O = L-seryl-[protein] + phosphate. The enzyme catalyses O-phospho-L-threonyl-[protein] + H2O = L-threonyl-[protein] + phosphate. In terms of biological role, phosphatase involved in elongation process, probably by acting as a regulator of brassinolide signaling. The protein is Serine/threonine-protein phosphatase BSL3 (BSL3) of Arabidopsis thaliana (Mouse-ear cress).